Here is a 181-residue protein sequence, read N- to C-terminus: UPF0398 protein LMOf2365_1918 (181 aa).

Belongs to the UPF0398 family.

This Listeria monocytogenes serotype 4b (strain F2365) protein is UPF0398 protein LMOf2365_1918.